Here is a 556-residue protein sequence, read N- to C-terminus: Oxygen-dependent choline dehydrogenase (556 aa).

Residue 4–33 (DYIIIGAGSAGNVLATRLTEDPNTTVLLLE) coordinates FAD. The active-site Proton acceptor is the His-473.

It belongs to the GMC oxidoreductase family. It depends on FAD as a cofactor.

It catalyses the reaction choline + A = betaine aldehyde + AH2. It carries out the reaction betaine aldehyde + NAD(+) + H2O = glycine betaine + NADH + 2 H(+). The protein operates within amine and polyamine biosynthesis; betaine biosynthesis via choline pathway; betaine aldehyde from choline (cytochrome c reductase route): step 1/1. Its function is as follows. Involved in the biosynthesis of the osmoprotectant glycine betaine. Catalyzes the oxidation of choline to betaine aldehyde and betaine aldehyde to glycine betaine at the same rate. This is Oxygen-dependent choline dehydrogenase from Escherichia coli O17:K52:H18 (strain UMN026 / ExPEC).